Here is a 109-residue protein sequence, read N- to C-terminus: Large ribosomal subunit protein P1 (109 aa).

Residues 90–109 (AAAKKEEEEEDDDMGFGLFD) form a disordered region.

This sequence belongs to the eukaryotic ribosomal protein P1/P2 family. As to quaternary structure, P1 and P2 exist as dimers at the large ribosomal subunit.

Plays an important role in the elongation step of protein synthesis. This Trypanosoma cruzi protein is Large ribosomal subunit protein P1.